Reading from the N-terminus, the 489-residue chain is MKRLHPALPSCLLLVLFGIWRTAPQTHASSAGLPPLSATSFLEDLMDRYGKNDSLTLTQLKSLLDHLHVGVGRDNVSQPKEGPRNLSTCFSSGDLFAAHNLSERSQIGASEFQEFCPTILQQLDSQACTSENQKSEENEQTEEGKPSAIEVWGYGFLCVTVISLCSLMGASVVPFMKKTFYKRLLLYFIALAIGTLYSNALFQLIPEAFGFNPQDNYVSKSAVVFGGFYLFFFTEKILKMLLKQKNEHHHGHNHFTSETLPSKKDQEEGVTEKLQNGDLDHMIPQHCNSELDGKAPGTDEKVIVNSMSVQDLQASQSACYWLKGVRYSDIGTLAWMITLSDGLHNFIDGLAIGASFTVSVFQGISTSVAILCEEFPHELGDFVILLNAGMSIQQALFFNFLSACCCYLGLAFGILAGSHFSANWIFALAGGMFLYIALADMFPEMNEVCQEDEKNDSFLVPFVIQNLGLLTGFSIMLVLTMYSGQIQIG.

A signal peptide spans 1 to 28 (MKRLHPALPSCLLLVLFGIWRTAPQTHA). The Extracellular portion of the chain corresponds to 29–155 (SSAGLPPLSA…PSAIEVWGYG (127 aa)). Residues asparagine 52, asparagine 75, asparagine 85, and asparagine 100 are each glycosylated (N-linked (GlcNAc...) asparagine). A helical membrane pass occupies residues 156–176 (FLCVTVISLCSLMGASVVPFM). Over 177 to 184 (KKTFYKRL) the chain is Cytoplasmic. The chain crosses the membrane as a helical span at residues 185–205 (LLYFIALAIGTLYSNALFQLI). At 206–221 (PEAFGFNPQDNYVSKS) the chain is on the extracellular side. Residues 222 to 242 (AVVFGGFYLFFFTEKILKMLL) traverse the membrane as a helical segment. Topologically, residues 243-349 (KQKNEHHHGH…SDGLHNFIDG (107 aa)) are cytoplasmic. The HHHGHXHX-motif motif lies at 248–255 (HHHGHNHF). A helical membrane pass occupies residues 350–370 (LAIGASFTVSVFQGISTSVAI). Over 371–394 (LCEEFPHELGDFVILLNAGMSIQQ) the chain is Extracellular. An XEXPHE-motif motif is present at residues 373–378 (EEFPHE). Residues 395–415 (ALFFNFLSACCCYLGLAFGIL) traverse the membrane as a helical segment. At 416-421 (AGSHFS) the chain is on the cytoplasmic side. A helical transmembrane segment spans residues 422–442 (ANWIFALAGGMFLYIALADMF). Topologically, residues 443-457 (PEMNEVCQEDEKNDS) are extracellular. Residues 458-478 (FLVPFVIQNLGLLTGFSIMLV) traverse the membrane as a helical segment. The Cytoplasmic portion of the chain corresponds to 479–489 (LTMYSGQIQIG).

The protein belongs to the ZIP transporter (TC 2.A.5) family. As to quaternary structure, homotrimer. Ubiquitinated. Ubiquitination occurs upon iron depletion. The ubiquitinated form undergoes proteasomal degradation. Post-translationally, N-glycosylated. N-glycosylation at Asn-100 is required for iron-regulated extraction of the transporter from membranes and subsequent proteasomal degradation. In terms of tissue distribution, widely expressed. Highly and transiently expressed during the early stage of adipocyte differentiation. Strongly expressed in liver, preadipocyte, duodenum and jejunum, moderately in brain, heart, skeletal muscle, spleen, pancreas, kidney and white adipose cells. Expression is almost undetectable in lung, testis and brown adipose cells. Expressed by chondrocytes and pituitary cells. As to expression, more strongly expressed in brain. More strongly expressed in liver, kidney and duodenum.

Its subcellular location is the cell membrane. It localises to the apical cell membrane. The protein localises to the basolateral cell membrane. It is found in the early endosome membrane. The protein resides in the late endosome membrane. Its subcellular location is the lysosome membrane. The catalysed reaction is Zn(2+)(out) + 2 hydrogencarbonate(out) = Zn(2+)(in) + 2 hydrogencarbonate(in). The enzyme catalyses Mn(2+)(out) + 2 hydrogencarbonate(out) = Mn(2+)(in) + 2 hydrogencarbonate(in). It carries out the reaction Fe(2+)(out) + 2 hydrogencarbonate(out) = Fe(2+)(in) + 2 hydrogencarbonate(in). It catalyses the reaction Cd(2+)(out) + 2 hydrogencarbonate(out) = Cd(2+)(in) + 2 hydrogencarbonate(in). Inhibited by cyanide and therefore dependent of an energy source. Inhibited by DIDS/4,4'-diisothiocyanatostilbene-2,2'-disulfonic acid, an inhibitor hydrogencarbonate-dependent transporters. Functionally, electroneutral transporter of the plasma membrane mediating the cellular uptake of the divalent metal cations zinc, manganese and iron that are important for tissue homeostasis, metabolism, development and immunity. Functions as an energy-dependent symporter, transporting through the membranes an electroneutral complex composed of a divalent metal cation and two bicarbonate anions. Beside these endogenous cellular substrates, can also import cadmium a non-essential metal which is cytotoxic and carcinogenic. Controls the cellular uptake by the intestinal epithelium of systemic zinc, which is in turn required to maintain tight junctions and the intestinal permeability. Modifies the activity of zinc-dependent phosphodiesterases, thereby indirectly regulating G protein-coupled receptor signaling pathways important for gluconeogenesis and chondrocyte differentiation. Regulates insulin receptor signaling, glucose uptake, glycogen synthesis and gluconeogenesis in hepatocytes through the zinc-dependent intracellular catabolism of insulin. Through zinc cellular uptake also plays a role in the adaptation of cells to endoplasmic reticulum stress. Major manganese transporter of the basolateral membrane of intestinal epithelial cells, it plays a central role in manganese systemic homeostasis through intestinal manganese uptake. Also involved in manganese extracellular uptake by cells of the blood-brain barrier. May also play a role in manganese and zinc homeostasis participating in their elimination from the blood through the hepatobiliary excretion. Also functions in the extracellular uptake of free iron. May also function intracellularly and mediate the transport from endosomes to cytosol of iron endocytosed by transferrin. Plays a role in innate immunity by regulating the expression of cytokines by activated macrophages. The sequence is that of Metal cation symporter ZIP14 from Mus musculus (Mouse).